Reading from the N-terminus, the 60-residue chain is Large ribosomal subunit protein bL32 (60 aa).

Positions 1 to 44 are disordered; sequence MAVQQNKKSRSARDMRRSHDALEASTLSVEKTTGEVHLRHHVSP. Residues 11–22 are compositionally biased toward basic and acidic residues; it reads SARDMRRSHDAL.

This sequence belongs to the bacterial ribosomal protein bL32 family.

This chain is Large ribosomal subunit protein bL32, found in Pseudomonas fluorescens (strain SBW25).